A 372-amino-acid chain; its full sequence is Aminomethyltransferase (372 aa).

Belongs to the GcvT family. In terms of assembly, the glycine cleavage system is composed of four proteins: P, T, L and H.

It carries out the reaction N(6)-[(R)-S(8)-aminomethyldihydrolipoyl]-L-lysyl-[protein] + (6S)-5,6,7,8-tetrahydrofolate = N(6)-[(R)-dihydrolipoyl]-L-lysyl-[protein] + (6R)-5,10-methylene-5,6,7,8-tetrahydrofolate + NH4(+). Its function is as follows. The glycine cleavage system catalyzes the degradation of glycine. This Prochlorococcus marinus (strain NATL2A) protein is Aminomethyltransferase.